We begin with the raw amino-acid sequence, 454 residues long: Bifunctional protein GlmU (454 aa).

Positions 1-231 are pyrophosphorylase; that stretch reads MDRATVSLIV…EAETLGVNTR (231 aa). UDP-N-acetyl-alpha-D-glucosamine is bound by residues 11–14, lysine 25, glutamine 78, 83–84, 106–108, glycine 143, glutamate 157, asparagine 172, and asparagine 229; these read LAAG, GT, and YGD. Residue aspartate 108 participates in Mg(2+) binding. Asparagine 229 is a Mg(2+) binding site. A linker region spans residues 232–252; sequence AQLAEAEAEFQKRARAAALED. Residues 253-454 form an N-acetyltransferase region; that stretch reads GVTLTAPDTV…AKAAKKKEAP (202 aa). 2 residues coordinate UDP-N-acetyl-alpha-D-glucosamine: arginine 318 and lysine 336. Histidine 348 functions as the Proton acceptor in the catalytic mechanism. Residues tyrosine 351 and asparagine 362 each coordinate UDP-N-acetyl-alpha-D-glucosamine. Residues alanine 365, 371–372, serine 390, serine 408, and arginine 425 each bind acetyl-CoA; that span reads NY.

The protein in the N-terminal section; belongs to the N-acetylglucosamine-1-phosphate uridyltransferase family. In the C-terminal section; belongs to the transferase hexapeptide repeat family. In terms of assembly, homotrimer. It depends on Mg(2+) as a cofactor.

The protein resides in the cytoplasm. It catalyses the reaction alpha-D-glucosamine 1-phosphate + acetyl-CoA = N-acetyl-alpha-D-glucosamine 1-phosphate + CoA + H(+). It carries out the reaction N-acetyl-alpha-D-glucosamine 1-phosphate + UTP + H(+) = UDP-N-acetyl-alpha-D-glucosamine + diphosphate. It participates in nucleotide-sugar biosynthesis; UDP-N-acetyl-alpha-D-glucosamine biosynthesis; N-acetyl-alpha-D-glucosamine 1-phosphate from alpha-D-glucosamine 6-phosphate (route II): step 2/2. It functions in the pathway nucleotide-sugar biosynthesis; UDP-N-acetyl-alpha-D-glucosamine biosynthesis; UDP-N-acetyl-alpha-D-glucosamine from N-acetyl-alpha-D-glucosamine 1-phosphate: step 1/1. The protein operates within bacterial outer membrane biogenesis; LPS lipid A biosynthesis. In terms of biological role, catalyzes the last two sequential reactions in the de novo biosynthetic pathway for UDP-N-acetylglucosamine (UDP-GlcNAc). The C-terminal domain catalyzes the transfer of acetyl group from acetyl coenzyme A to glucosamine-1-phosphate (GlcN-1-P) to produce N-acetylglucosamine-1-phosphate (GlcNAc-1-P), which is converted into UDP-GlcNAc by the transfer of uridine 5-monophosphate (from uridine 5-triphosphate), a reaction catalyzed by the N-terminal domain. The chain is Bifunctional protein GlmU from Cereibacter sphaeroides (strain ATCC 17023 / DSM 158 / JCM 6121 / CCUG 31486 / LMG 2827 / NBRC 12203 / NCIMB 8253 / ATH 2.4.1.) (Rhodobacter sphaeroides).